Here is a 723-residue protein sequence, read N- to C-terminus: Protein Aster-A (723 aa).

Positions 1-18 (MFDTTPHSGRSSPSSSPS) are enriched in low complexity. The tract at residues 1 to 63 (MFDTTPHSGR…SGVSGTLSTQ (63 aa)) is disordered. Residues 28 to 38 (PSRPPSAPEPE) show a composition bias toward pro residues. One can recognise a GRAM domain in the interval 93-160 (EDFRKLFSKL…KEVTCLKKEK (68 aa)). The interval 257–337 (SPSGAADRSQ…DGPTSNLGPL (81 aa)) is disordered. Phosphoserine occurs at positions 265, 269, and 273. Positions 302–314 (DSQLDASSSQTVT) are enriched in polar residues. Positions 370–541 (SGRLLINSVF…ELAKAEKVSL (172 aa)) constitute a VASt domain. The residue at position 418 (serine 418) is a Phosphoserine. Residues 562–601 (LSWRGHRDGPQHPDPDPCTQTSMHTSGSLSSRFSEPSVDQ) are disordered. Basic and acidic residues predominate over residues 566 to 576 (GHRDGPQHPDP). Over residues 579–595 (CTQTSMHTSGSLSSRFS) the composition is skewed to polar residues. A helical membrane pass occupies residues 610–630 (ALVLISIVLIVLIALNALLFY).

It is found in the endoplasmic reticulum membrane. The protein resides in the cell membrane. Its subcellular location is the cytoplasmic vesicle. The protein localises to the autophagosome. Its function is as follows. Cholesterol transporter that mediates non-vesicular transport of cholesterol from the plasma membrane (PM) to the endoplasmic reticulum (ER). Contains unique domains for binding cholesterol and the PM, thereby serving as a molecular bridge for the transfer of cholesterol from the PM to the ER. Plays a crucial role in cholesterol homeostasis and has the unique ability to localize to the PM based on the level of membrane cholesterol. In lipid-poor conditions localizes to the ER membrane and in response to excess cholesterol in the PM is recruited to the endoplasmic reticulum-plasma membrane contact sites (EPCS) which is mediated by the GRAM domain. At the EPCS, the sterol-binding VASt/ASTER domain binds to the cholesterol in the PM and facilitates its transfer from the PM to ER. May play a role in tumor progression. Plays a role in autophagy regulation and is required for biogenesis of the autophagosome. This function in autophagy requires its cholesterol-transfer activity. The polypeptide is Protein Aster-A (Rattus norvegicus (Rat)).